Reading from the N-terminus, the 327-residue chain is GTPase Obg (327 aa).

One can recognise an Obg domain in the interval 2–160 (HTFKDSLNIT…LDLRLELVLI (159 aa)). The OBG-type G domain occupies 161–326 (ADIGLVGLPN…LVNELFALSR (166 aa)). GTP contacts are provided by residues 167–174 (GLPNAGKS), 192–196 (FTTKV), 213–216 (DVPG), 280–283 (NKLD), and 307–309 (SIY). Residues Ser-174 and Thr-194 each coordinate Mg(2+).

It belongs to the TRAFAC class OBG-HflX-like GTPase superfamily. OBG GTPase family. Monomer. Mg(2+) is required as a cofactor.

Its subcellular location is the cytoplasm. Its function is as follows. An essential GTPase which binds GTP, GDP and possibly (p)ppGpp with moderate affinity, with high nucleotide exchange rates and a fairly low GTP hydrolysis rate. Plays a role in control of the cell cycle, stress response, ribosome biogenesis and in those bacteria that undergo differentiation, in morphogenesis control. The protein is GTPase Obg of Borrelia turicatae (strain 91E135).